We begin with the raw amino-acid sequence, 293 residues long: ATP synthase gamma chain (293 aa).

The protein belongs to the ATPase gamma chain family. F-type ATPases have 2 components, CF(1) - the catalytic core - and CF(0) - the membrane proton channel. CF(1) has five subunits: alpha(3), beta(3), gamma(1), delta(1), epsilon(1). CF(0) has three main subunits: a, b and c.

It localises to the cell inner membrane. Produces ATP from ADP in the presence of a proton gradient across the membrane. The gamma chain is believed to be important in regulating ATPase activity and the flow of protons through the CF(0) complex. This is ATP synthase gamma chain from Nitrosospira multiformis (strain ATCC 25196 / NCIMB 11849 / C 71).